The following is a 207-amino-acid chain: A-type ATP synthase subunit E (207 aa).

Belongs to the V-ATPase E subunit family. Has multiple subunits with at least A(3), B(3), C, D, E, F, H, I and proteolipid K(x).

It localises to the cell membrane. Its function is as follows. Component of the A-type ATP synthase that produces ATP from ADP in the presence of a proton gradient across the membrane. The protein is A-type ATP synthase subunit E of Methanosphaera stadtmanae (strain ATCC 43021 / DSM 3091 / JCM 11832 / MCB-3).